Here is a 369-residue protein sequence, read N- to C-terminus: uncharacterized protein (369 aa).

Lys184 carries the post-translational modification N6-(pyridoxal phosphate)lysine.

This sequence belongs to the class-V pyridoxal-phosphate-dependent aminotransferase family. It depends on pyridoxal 5'-phosphate as a cofactor.

This is an uncharacterized protein from Helicobacter pylori (strain ATCC 700392 / 26695) (Campylobacter pylori).